The sequence spans 311 residues: Glycerol-3-phosphate dehydrogenase [NAD(P)+] (311 aa).

NADPH-binding residues include tryptophan 11, arginine 30, arginine 31, and lysine 95. Sn-glycerol 3-phosphate contacts are provided by lysine 95, glycine 123, and serine 125. Alanine 127 contributes to the NADPH binding site. Residues lysine 177, aspartate 230, serine 240, arginine 241, and asparagine 242 each coordinate sn-glycerol 3-phosphate. Lysine 177 (proton acceptor) is an active-site residue. Arginine 241 is an NADPH binding site. Residues valine 265 and glutamate 267 each contribute to the NADPH site.

This sequence belongs to the NAD-dependent glycerol-3-phosphate dehydrogenase family.

Its subcellular location is the cytoplasm. The catalysed reaction is sn-glycerol 3-phosphate + NAD(+) = dihydroxyacetone phosphate + NADH + H(+). It carries out the reaction sn-glycerol 3-phosphate + NADP(+) = dihydroxyacetone phosphate + NADPH + H(+). It participates in membrane lipid metabolism; glycerophospholipid metabolism. Catalyzes the reduction of the glycolytic intermediate dihydroxyacetone phosphate (DHAP) to sn-glycerol 3-phosphate (G3P), the key precursor for phospholipid synthesis. The chain is Glycerol-3-phosphate dehydrogenase [NAD(P)+] from Bartonella bacilliformis (strain ATCC 35685 / KC583 / Herrer 020/F12,63).